We begin with the raw amino-acid sequence, 418 residues long: Gamma-glutamyl phosphate reductase (418 aa).

The protein belongs to the gamma-glutamyl phosphate reductase family.

The protein localises to the cytoplasm. It carries out the reaction L-glutamate 5-semialdehyde + phosphate + NADP(+) = L-glutamyl 5-phosphate + NADPH + H(+). The protein operates within amino-acid biosynthesis; L-proline biosynthesis; L-glutamate 5-semialdehyde from L-glutamate: step 2/2. In terms of biological role, catalyzes the NADPH-dependent reduction of L-glutamate 5-phosphate into L-glutamate 5-semialdehyde and phosphate. The product spontaneously undergoes cyclization to form 1-pyrroline-5-carboxylate. The sequence is that of Gamma-glutamyl phosphate reductase from Desulfotalea psychrophila (strain LSv54 / DSM 12343).